Reading from the N-terminus, the 263-residue chain is Acyl-[acyl-carrier-protein]--UDP-N-acetylglucosamine O-acyltransferase (263 aa).

It belongs to the transferase hexapeptide repeat family. LpxA subfamily. In terms of assembly, homotrimer.

It is found in the cytoplasm. It catalyses the reaction a (3R)-hydroxyacyl-[ACP] + UDP-N-acetyl-alpha-D-glucosamine = a UDP-3-O-[(3R)-3-hydroxyacyl]-N-acetyl-alpha-D-glucosamine + holo-[ACP]. It functions in the pathway glycolipid biosynthesis; lipid IV(A) biosynthesis; lipid IV(A) from (3R)-3-hydroxytetradecanoyl-[acyl-carrier-protein] and UDP-N-acetyl-alpha-D-glucosamine: step 1/6. Its function is as follows. Involved in the biosynthesis of lipid A, a phosphorylated glycolipid that anchors the lipopolysaccharide to the outer membrane of the cell. The polypeptide is Acyl-[acyl-carrier-protein]--UDP-N-acetylglucosamine O-acyltransferase (Caulobacter vibrioides (strain ATCC 19089 / CIP 103742 / CB 15) (Caulobacter crescentus)).